The sequence spans 141 residues: MNYDETNNELFQESNMQELKYGERNILEGELITFPNPRIGRRYEINISLPEFTCKCPFSGYPDFATIHIKYIPNERVVELKAIKLYINSYRERYISHEESVNQILDDFVAACDPLEVKIKGDFLPRGNVHTTIEVEHYKAS.

Catalysis depends on Cys-56, which acts as the Thioimide intermediate. Asp-63 acts as the Proton donor in catalysis. Residues 78–80 and 97–98 contribute to the substrate site; these read VEL and HE.

The protein belongs to the GTP cyclohydrolase I family. QueF type 1 subfamily.

It is found in the cytoplasm. The catalysed reaction is 7-aminomethyl-7-carbaguanine + 2 NADP(+) = 7-cyano-7-deazaguanine + 2 NADPH + 3 H(+). The protein operates within tRNA modification; tRNA-queuosine biosynthesis. Catalyzes the NADPH-dependent reduction of 7-cyano-7-deazaguanine (preQ0) to 7-aminomethyl-7-deazaguanine (preQ1). This Trichodesmium erythraeum (strain IMS101) protein is NADPH-dependent 7-cyano-7-deazaguanine reductase.